The sequence spans 369 residues: MASSVFLSSFSSSSSLQLCSSFHGEYLAPSRCFLGAPVTSSSLSLSGKKNSYSPRQFHVSAKKVSGLEEAIRIRKMRELETKSKVRRNPPLRRGRVSPRLLVPDHIPRPPYVESGVLPDISSEFQIPGPEGIAKMRAACELAARVLNYAGTLVKPSVTTNEIDKAVHDMIIEAGAYPSPLGYGGFPKSVCTSVNECMCHGIPDSRQLQSGDIINIDVTVYLDGYHGDTSRTFFCGEVDEGFKRLVKVTEECLERGIAVCKDGASFKKIGKRISEHAEKFGYNVVERFVGHGVGPVFHSEPLIYHYRNDEPGLMVEGQTFTIEPILTIGTTECVTWPDNWTTLTADGGVAAQFEHTILITRTGSEILTKC.

The transit peptide at Met1–Ala61 directs the protein to the chloroplast. His199 is a substrate binding site. A divalent metal cation-binding residues include Asp216, Asp227, and His290. His297 is a binding site for substrate. Residues Glu322 and Glu353 each contribute to the a divalent metal cation site.

Belongs to the peptidase M24A family. Methionine aminopeptidase type 1 subfamily. Co(2+) is required as a cofactor. The cofactor is Zn(2+). Mn(2+) serves as cofactor. Requires Fe(2+) as cofactor. As to expression, ubiquitous. Preferentially expressed in green tissues.

The protein resides in the plastid. It localises to the chloroplast. The catalysed reaction is Release of N-terminal amino acids, preferentially methionine, from peptides and arylamides.. Removes the N-terminal methionine from nascent proteins. The N-terminal methionine is often cleaved when the second residue in the primary sequence is small and uncharged (Met-Ala-, Cys, Gly, Pro, Ser, Thr, or Val). The protein is Methionine aminopeptidase 1B, chloroplastic (MAP1B) of Arabidopsis thaliana (Mouse-ear cress).